We begin with the raw amino-acid sequence, 398 residues long: Mu-type opioid receptor (398 aa).

At 1–66 (MDSSTGPGNT…CPQTGSPSMV (66 aa)) the chain is on the extracellular side. N-linked (GlcNAc...) asparagine glycans are attached at residues Asn-9, Asn-31, Asn-38, Asn-46, and Asn-53. The helical transmembrane segment at 67-91 (TAITIMALYSIVCVVGLFGNFLVMY) threads the bilayer. Residues 92-104 (VIVRYTKMKTATN) lie on the Cytoplasmic side of the membrane. A helical transmembrane segment spans residues 105–129 (IYIFNLALADALATSTLPFQSVNYL). Residues 130 to 140 (MGTWPFGTILC) lie on the Extracellular side of the membrane. Residues Cys-140 and Cys-217 are joined by a disulfide bond. Residues 141–163 (KIVISIDYYNMFTSIFTLCTMSV) form a helical membrane-spanning segment. The Cytoplasmic segment spans residues 164–183 (DRYIAVCHPVKALDFRTPRN). At Tyr-166 the chain carries Phosphotyrosine. The chain crosses the membrane as a helical span at residues 184–205 (AKIVNVCNWILSSAIGLPVMFM). At 206-228 (ATTKYRQGSIDCTLTFSHPTWYW) the chain is on the extracellular side. The helical transmembrane segment at 229–253 (ENLLKICVFIFAFIMPVLIITVCYG) threads the bilayer. Over 254 to 277 (LMILRLKSVRMLSGSKEKDRNLRR) the chain is Cytoplasmic. The chain crosses the membrane as a helical span at residues 278-304 (ITRMVLVVVAVFIVCWTPIHIYVIIKA). Residues 305-312 (LITIPETT) are Extracellular-facing. Residues 313 to 336 (FQTVSWHFCIALGYTNSCLNPVLY) form a helical membrane-spanning segment. Positions 332–336 (NPVLY) match the NPxxY; plays a role in stabilizing the activated conformation of the receptor motif. The Cytoplasmic segment spans residues 337-398 (AFLDENFKRC…NLEAETAPLP (62 aa)). Cys-351 carries the S-palmitoyl cysteine lipid modification. The interval 361-385 (QNSTRVRQNTREHPSTANTVDRTNH) is disordered. Ser-363 is modified (phosphoserine). Thr-370 carries the post-translational modification Phosphothreonine. At Ser-375 the chain carries Phosphoserine. The residue at position 394 (Thr-394) is a Phosphothreonine.

Belongs to the G-protein coupled receptor 1 family. Forms homooligomers and heterooligomers with other GPCRs, such as OPRD1, OPRK1, OPRL1, NPFFR2, ADRA2A, SSTR2, CNR1 and CCR5 (probably in dimeric forms). Interacts with heterotrimeric G proteins; interaction with a heterotrimeric complex containing GNAI1, GNB1 and GNG2 stabilizes the active conformation of the receptor and increases its affinity for endomorphin-2, the synthetic opioid peptide DAMGO and for morphinan agonists. Interacts with PPL; the interaction disrupts agonist-mediated G-protein activation. Interacts (via C-terminus) with DNAJB4 (via C-terminus). Interacts with calmodulin; the interaction inhibits the constitutive activity of OPRM1; it abolishes basal and attenuates agonist-stimulated G-protein coupling. Interacts with FLNA, PLD2, RANBP9 and WLS and GPM6A. Interacts with RTP4. Interacts with SYP and GNAS. Interacts with RGS9, RGS17, RGS20, RGS4, PPP1R9B and HINT1. In terms of processing, phosphorylated. Differentially phosphorylated in basal and agonist-induced conditions. Agonist-mediated phosphorylation modulates receptor internalization. Phosphorylated by GRK2 in a agonist-dependent manner. Phosphorylation at Tyr-166 requires receptor activation, is dependent on non-receptor protein tyrosine kinase Src and results in a decrease in agonist efficacy by reducing G-protein coupling efficiency. Phosphorylated on tyrosine residues; the phosphorylation is involved in agonist-induced G-protein-independent receptor down-regulation. Phosphorylation at Ser-375 is involved in G-protein-dependent but not beta-arrestin-dependent activation of the ERK pathway. Ubiquitinated. A basal ubiquitination seems not to be related to degradation. Ubiquitination is increased upon formation of OPRM1:OPRD1 oligomers leading to proteasomal degradation; the ubiquitination is diminished by RTP4. Brain. Is expressed in the cerebral cortex, caudate putamen, nucleus accumbens, septal nuclei, thalamus, hippocampus, and habenula. Not detected in cerebellum.

Its subcellular location is the cell membrane. The protein resides in the cell projection. It is found in the axon. The protein localises to the perikaryon. It localises to the dendrite. Its subcellular location is the endosome. In terms of biological role, receptor for endogenous opioids such as beta-endorphin and endomorphin. Receptor for natural and synthetic opioids including morphine, heroin, DAMGO, fentanyl, etorphine, buprenorphin and methadone. Also activated by enkephalin peptides, such as Met-enkephalin or Met-enkephalin-Arg-Phe, with higher affinity for Met-enkephalin-Arg-Phe. Agonist binding to the receptor induces coupling to an inactive GDP-bound heterotrimeric G-protein complex and subsequent exchange of GDP for GTP in the G-protein alpha subunit leading to dissociation of the G-protein complex with the free GTP-bound G-protein alpha and the G-protein beta-gamma dimer activating downstream cellular effectors. The agonist- and cell type-specific activity is predominantly coupled to pertussis toxin-sensitive G(i) and G(o) G alpha proteins, GNAI1, GNAI2, GNAI3 and GNAO1 isoforms Alpha-1 and Alpha-2, and to a lesser extent to pertussis toxin-insensitive G alpha proteins GNAZ and GNA15. They mediate an array of downstream cellular responses, including inhibition of adenylate cyclase activity and both N-type and L-type calcium channels, activation of inward rectifying potassium channels, mitogen-activated protein kinase (MAPK), phospholipase C (PLC), phosphoinositide/protein kinase (PKC), phosphoinositide 3-kinase (PI3K) and regulation of NF-kappa-B. Also couples to adenylate cyclase stimulatory G alpha proteins. The selective temporal coupling to G-proteins and subsequent signaling can be regulated by RGSZ proteins, such as RGS9, RGS17 and RGS4. Phosphorylation by members of the GPRK subfamily of Ser/Thr protein kinases and association with beta-arrestins is involved in short-term receptor desensitization. Beta-arrestins associate with the GPRK-phosphorylated receptor and uncouple it from the G-protein thus terminating signal transduction. The phosphorylated receptor is internalized through endocytosis via clathrin-coated pits which involves beta-arrestins. The activation of the ERK pathway occurs either in a G-protein-dependent or a beta-arrestin-dependent manner and is regulated by agonist-specific receptor phosphorylation. Acts as a class A G-protein coupled receptor (GPCR) which dissociates from beta-arrestin at or near the plasma membrane and undergoes rapid recycling. Receptor down-regulation pathways are varying with the agonist and occur dependent or independent of G-protein coupling. Endogenous ligands induce rapid desensitization, endocytosis and recycling. Heterooligomerization with other GPCRs can modulate agonist binding, signaling and trafficking properties. The polypeptide is Mu-type opioid receptor (Oprm1) (Rattus norvegicus (Rat)).